A 398-amino-acid chain; its full sequence is 1-deoxy-D-xylulose 5-phosphate reductoisomerase (398 aa).

Thr28, Gly29, Ser30, Ile31, Gly54, Asn57, and Asn135 together coordinate NADPH. Lys136 provides a ligand contact to 1-deoxy-D-xylulose 5-phosphate. Glu137 contributes to the NADPH binding site. Asp159 is a Mn(2+) binding site. Residues Ser160, Glu161, Ser185, and His208 each coordinate 1-deoxy-D-xylulose 5-phosphate. Glu161 is a binding site for Mn(2+). Gly214 serves as a coordination point for NADPH. The 1-deoxy-D-xylulose 5-phosphate site is built by Ser221, Asn226, Lys227, and Glu230. Residue Glu230 coordinates Mn(2+).

It belongs to the DXR family. The cofactor is Mg(2+). It depends on Mn(2+) as a cofactor.

The catalysed reaction is 2-C-methyl-D-erythritol 4-phosphate + NADP(+) = 1-deoxy-D-xylulose 5-phosphate + NADPH + H(+). Its pathway is isoprenoid biosynthesis; isopentenyl diphosphate biosynthesis via DXP pathway; isopentenyl diphosphate from 1-deoxy-D-xylulose 5-phosphate: step 1/6. Catalyzes the NADPH-dependent rearrangement and reduction of 1-deoxy-D-xylulose-5-phosphate (DXP) to 2-C-methyl-D-erythritol 4-phosphate (MEP). The sequence is that of 1-deoxy-D-xylulose 5-phosphate reductoisomerase from Rhodococcus jostii (strain RHA1).